The sequence spans 191 residues: Glutathione-dependent formaldehyde-activating enzyme (191 aa).

Residues 22–169 enclose the CENP-V/GFA domain; the sequence is FAGGTLQCLC…LTELGLTPYD (148 aa). The Zn(2+) site is built by Cys29, Cys31, Cys50, Cys52, Cys55, Cys97, and Cys100.

This sequence belongs to the Gfa family. It depends on Zn(2+) as a cofactor.

The catalysed reaction is S-(hydroxymethyl)glutathione = glutathione + formaldehyde. Its pathway is one-carbon metabolism; formaldehyde degradation; formate from formaldehyde (glutathione route): step 1/3. Its function is as follows. Catalyzes the condensation of formaldehyde and glutathione to S-hydroxymethylglutathione. This Xanthomonas campestris pv. campestris (strain 8004) protein is Glutathione-dependent formaldehyde-activating enzyme.